A 64-amino-acid chain; its full sequence is Frontoxin IV (64 aa).

Intrachain disulfides connect C3–C24, C6–C11, C17–C41, C45–C57, and C58–C63.

Expressed by the venom gland.

It is found in the secreted. Its function is as follows. Produces peripheral paralysis by blocking neuromuscular transmission at the postsynaptic site. Binds to the muscular nicotinic acetylcholine receptor (nAChR). This is Frontoxin IV from Micrurus frontalis (Coral snake).